A 590-amino-acid chain; its full sequence is EGF-like and EMI domain-containing protein 1 (590 aa).

The first 23 residues, 1–23, serve as a signal peptide directing secretion; sequence MTSPLCFWCFCVWAAANWPPGSA. The EMI domain occupies 44-104; it reads LSRPCAQAFI…RCCPGWIQWD (61 aa). The region spanning 105 to 145 is the EGF-like 1 domain; sequence DEPGCFSSLSSLGTHFSGRECSYQDTRQCLCSQGFHGPHCQ. 11 disulfide bridges follow: Cys-109–Cys-125, Cys-135–Cys-144, Cys-168–Cys-179, Cys-175–Cys-188, Cys-190–Cys-203, Cys-209–Cys-219, Cys-215–Cys-228, Cys-230–Cys-243, Cys-249–Cys-260, Cys-256–Cys-269, and Cys-271–Cys-284. The 41-residue stretch at 164 to 204 folds into the EGF-like 2; calcium-binding domain; it reads NVDECAVVNGGCQQRCINTLGTFHCECDTGYRRHADERTCI. Residues 205 to 244 enclose the EGF-like 3 domain; it reads KTDPCAGANGCAHLCQTENGMARCACHAGYQLSEDKKACE. Residues 245 to 285 form the EGF-like 4; calcium-binding domain; it reads DINECAGELAPCAHHCVNSKGSFTCTCHPGFELGADRKHCY. Residues 393 to 424 are disordered; that stretch reads RLAQNPPQPFPYLDPSLTASYEDEDNDDADSE. A compositionally biased stretch (acidic residues) spans 413–424; sequence YEDEDNDDADSE. The region spanning 445-481 is the EGF-like 5 domain; sequence FGLDCSLSCEDCMNGGRCQEGKSGCLCPAEWTGLICN. Cystine bridges form between Cys-449/Cys-462, Cys-456/Cys-469, and Cys-471/Cys-480.

The polypeptide is EGF-like and EMI domain-containing protein 1 (Egfem1) (Mus musculus (Mouse)).